The chain runs to 589 residues: Aspartate--tRNA ligase (589 aa).

E175 lines the L-aspartate pocket. The segment at 199–202 is aspartate; that stretch reads QIFK. Position 221 (R221) interacts with L-aspartate. ATP is bound by residues 221 to 223 and Q230; that span reads RDE. H449 is an L-aspartate binding site. E483 is an ATP binding site. An L-aspartate-binding site is contributed by R490. Residue 535-538 coordinates ATP; that stretch reads GLDR.

Belongs to the class-II aminoacyl-tRNA synthetase family. Type 1 subfamily. As to quaternary structure, homodimer.

It localises to the cytoplasm. The enzyme catalyses tRNA(Asp) + L-aspartate + ATP = L-aspartyl-tRNA(Asp) + AMP + diphosphate. Catalyzes the attachment of L-aspartate to tRNA(Asp) in a two-step reaction: L-aspartate is first activated by ATP to form Asp-AMP and then transferred to the acceptor end of tRNA(Asp). The polypeptide is Aspartate--tRNA ligase (Shouchella clausii (strain KSM-K16) (Alkalihalobacillus clausii)).